The chain runs to 231 residues: MRQYNDLFKIIHREGYIFIASFALVSFLLASFNEKLGCIGFIATAWCIYFFRNPDRFVPISDDLVISPADGIIQEIKEALPPQELGLGDVEMIRVSIFLNIFNVHVNRIPANGKILALHYNPGKFFNASLDKASIYNERQSVLMETDKGQKIVFVQIAGLIARRIVCDLEEGNEVKTGERYGIIRFGSRVDVYLPLKTALLVSKGQTAIGGETIIADFGRKKIAEFKFERR.

The active-site Schiff-base intermediate with substrate; via pyruvic acid is the Ser188. Ser188 is modified (pyruvic acid (Ser); by autocatalysis).

This sequence belongs to the phosphatidylserine decarboxylase family. PSD-A subfamily. Heterodimer of a large membrane-associated beta subunit and a small pyruvoyl-containing alpha subunit. The cofactor is pyruvate. Is synthesized initially as an inactive proenzyme. Formation of the active enzyme involves a self-maturation process in which the active site pyruvoyl group is generated from an internal serine residue via an autocatalytic post-translational modification. Two non-identical subunits are generated from the proenzyme in this reaction, and the pyruvate is formed at the N-terminus of the alpha chain, which is derived from the carboxyl end of the proenzyme. The post-translation cleavage follows an unusual pathway, termed non-hydrolytic serinolysis, in which the side chain hydroxyl group of the serine supplies its oxygen atom to form the C-terminus of the beta chain, while the remainder of the serine residue undergoes an oxidative deamination to produce ammonia and the pyruvoyl prosthetic group on the alpha chain.

The protein localises to the cell membrane. The catalysed reaction is a 1,2-diacyl-sn-glycero-3-phospho-L-serine + H(+) = a 1,2-diacyl-sn-glycero-3-phosphoethanolamine + CO2. It participates in phospholipid metabolism; phosphatidylethanolamine biosynthesis; phosphatidylethanolamine from CDP-diacylglycerol: step 2/2. Its function is as follows. Catalyzes the formation of phosphatidylethanolamine (PtdEtn) from phosphatidylserine (PtdSer). This chain is Phosphatidylserine decarboxylase proenzyme, found in Rickettsia akari (strain Hartford).